The following is a 732-amino-acid chain: MIINKAIDLGKGKILSIETGKMAKQADGAALVRLGDTMVLATVVSSKTPPPANQDYFPLQVEYREKYSAAGKFPGGFFKREGRPSEKEILTARLIDRALRPLFPDGYLFETQIIVTVFSSDQINDADVLGGVAASAAIMVSDIPFHNSMSEVRVGRINGEFIVNPNINELQGSDIDICIGGTANTICMLEGEMKEISEAEMLDAIKFGHEAIRKICALQDEMAAEIARPQRSFAPVKAPAKLKEVIAGLSETRLKELAYTPLCKEDRAEKTASVYKETLQSTLELFKALLTPEEIAAEPEKALCLNAHIIEEEIHAVEKKVMRHMILDDGKRLDGRTLDEIRPISIELGIIPRAHGSALFTRGETQALVTITLGTKKDAQSVDTLTDSADKRFMLHYNFPPFSVGETGRVGGTGRREIGHGNLAERSIKMVSPSETDFPYTIRIVSDILESNGSSSMASVCGGTLALMDGGVPIRKPVSGIAMGLIKEGDAYSVLSDILGNEDHLGDMDFKVAGTEDGITACQMDIKIDGLDYHILETALEQARKGRLHILDKMEVAIPISRGELAQYAPRLTSIQIPVDAIGLIIGKGGETIRSITEETGAEINIEDDGTVTIACSSPEGTNAAVETIKTLISKPEIGNTYLGKVRDIRDELGAFVEFLPKTDGLVHISEISKERVTKVSDHLKVGDRVKVKLVDIRKDPRTGKNRFALSIKAVESEPEKSDENKAGTEGN.

Residues Asp503 and Asp509 each contribute to the Mg(2+) site. In terms of domain architecture, KH spans 570-629 (PRLTSIQIPVDAIGLIIGKGGETIRSITEETGAEINIEDDGTVTIACSSPEGTNAAVETI). Residues 639–713 (GNTYLGKVRD…GKNRFALSIK (75 aa)) form the S1 motif domain. Positions 710–732 (LSIKAVESEPEKSDENKAGTEGN) are disordered. Residues 715–732 (VESEPEKSDENKAGTEGN) show a composition bias toward basic and acidic residues.

It belongs to the polyribonucleotide nucleotidyltransferase family. The cofactor is Mg(2+).

It is found in the cytoplasm. The catalysed reaction is RNA(n+1) + phosphate = RNA(n) + a ribonucleoside 5'-diphosphate. Its function is as follows. Involved in mRNA degradation. Catalyzes the phosphorolysis of single-stranded polyribonucleotides processively in the 3'- to 5'-direction. This is Polyribonucleotide nucleotidyltransferase from Chlorobium phaeobacteroides (strain DSM 266 / SMG 266 / 2430).